A 507-amino-acid polypeptide reads, in one-letter code: ATP synthase subunit alpha, chloroplastic (507 aa).

An ATP-binding site is contributed by 170–177 (GDRQTGKT).

This sequence belongs to the ATPase alpha/beta chains family. As to quaternary structure, F-type ATPases have 2 components, CF(1) - the catalytic core - and CF(0) - the membrane proton channel. CF(1) has five subunits: alpha(3), beta(3), gamma(1), delta(1), epsilon(1). CF(0) has four main subunits: a, b, b' and c.

It is found in the plastid. It localises to the chloroplast thylakoid membrane. It catalyses the reaction ATP + H2O + 4 H(+)(in) = ADP + phosphate + 5 H(+)(out). In terms of biological role, produces ATP from ADP in the presence of a proton gradient across the membrane. The alpha chain is a regulatory subunit. This is ATP synthase subunit alpha, chloroplastic from Tetradesmus obliquus (Green alga).